The chain runs to 189 residues: Thymidine kinase (189 aa).

ATP-binding positions include 9–16 (GTMNSGKT) and 85–88 (DESQ). Residue Glu86 is the Proton acceptor of the active site. Zn(2+) is bound by residues Cys143, Cys146, Cys180, and His183.

The protein belongs to the thymidine kinase family. Homotetramer.

It localises to the cytoplasm. The catalysed reaction is thymidine + ATP = dTMP + ADP + H(+). This chain is Thymidine kinase, found in Streptococcus pyogenes serotype M3 (strain ATCC BAA-595 / MGAS315).